A 130-amino-acid chain; its full sequence is Methylglyoxal synthase (130 aa).

One can recognise an MGS-like domain in the interval Met1–Cys130. Substrate contacts are provided by residues His11, Lys15, Thr37–Thr40, and Ser57–Gly58. The active-site Proton donor/acceptor is the Asp63. His90 contacts substrate.

Belongs to the methylglyoxal synthase family.

It carries out the reaction dihydroxyacetone phosphate = methylglyoxal + phosphate. Catalyzes the formation of methylglyoxal from dihydroxyacetone phosphate. This is Methylglyoxal synthase from Burkholderia lata (strain ATCC 17760 / DSM 23089 / LMG 22485 / NCIMB 9086 / R18194 / 383).